The following is a 179-amino-acid chain: Sec-independent protein translocase protein TatB (179 aa).

The chain crosses the membrane as a helical span at residues 1 to 21 (MLDLGLSKMALIGVVALVVLG). The span at 101–115 (GAAGDAGSVGSPGSD) shows a compositional bias: low complexity. Positions 101–134 (GAAGDAGSVGSPGSDTPAAPSWRGSSAALAPKRR) are disordered.

Belongs to the TatB family. As to quaternary structure, the Tat system comprises two distinct complexes: a TatABC complex, containing multiple copies of TatA, TatB and TatC subunits, and a separate TatA complex, containing only TatA subunits. Substrates initially bind to the TatABC complex, which probably triggers association of the separate TatA complex to form the active translocon.

Its subcellular location is the cell inner membrane. Functionally, part of the twin-arginine translocation (Tat) system that transports large folded proteins containing a characteristic twin-arginine motif in their signal peptide across membranes. Together with TatC, TatB is part of a receptor directly interacting with Tat signal peptides. TatB may form an oligomeric binding site that transiently accommodates folded Tat precursor proteins before their translocation. This chain is Sec-independent protein translocase protein TatB, found in Burkholderia orbicola (strain AU 1054).